Here is a 142-residue protein sequence, read N- to C-terminus: Transcriptional regulator MraZ (142 aa).

2 consecutive SpoVT-AbrB domains span residues 5-48 (EFEY…PLCE) and 77-120 (AFDV…DKET).

Belongs to the MraZ family. In terms of assembly, forms oligomers.

It localises to the cytoplasm. Its subcellular location is the nucleoid. In Dehalococcoides mccartyi (strain ATCC BAA-2266 / KCTC 15142 / 195) (Dehalococcoides ethenogenes (strain 195)), this protein is Transcriptional regulator MraZ.